The following is a 474-amino-acid chain: Aspartyl/glutamyl-tRNA(Asn/Gln) amidotransferase subunit B (474 aa).

This sequence belongs to the GatB/GatE family. GatB subfamily. In terms of assembly, heterotrimer of A, B and C subunits.

It catalyses the reaction L-glutamyl-tRNA(Gln) + L-glutamine + ATP + H2O = L-glutaminyl-tRNA(Gln) + L-glutamate + ADP + phosphate + H(+). The catalysed reaction is L-aspartyl-tRNA(Asn) + L-glutamine + ATP + H2O = L-asparaginyl-tRNA(Asn) + L-glutamate + ADP + phosphate + 2 H(+). Functionally, allows the formation of correctly charged Asn-tRNA(Asn) or Gln-tRNA(Gln) through the transamidation of misacylated Asp-tRNA(Asn) or Glu-tRNA(Gln) in organisms which lack either or both of asparaginyl-tRNA or glutaminyl-tRNA synthetases. The reaction takes place in the presence of glutamine and ATP through an activated phospho-Asp-tRNA(Asn) or phospho-Glu-tRNA(Gln). This is Aspartyl/glutamyl-tRNA(Asn/Gln) amidotransferase subunit B from Campylobacter curvus (strain 525.92).